The sequence spans 248 residues: DNA polymerase sliding clamp (248 aa).

It belongs to the PCNA family. Homotrimer. The subunits circularize to form a toroid; DNA passes through its center. Replication factor C (RFC) is required to load the toroid on the DNA.

Sliding clamp subunit that acts as a moving platform for DNA processing. Responsible for tethering the catalytic subunit of DNA polymerase and other proteins to DNA during high-speed replication. The protein is DNA polymerase sliding clamp of Nitrosopumilus maritimus (strain SCM1).